Here is a 508-residue protein sequence, read N- to C-terminus: Maturase K (508 aa).

Belongs to the intron maturase 2 family. MatK subfamily.

The protein localises to the plastid. The protein resides in the chloroplast. In terms of biological role, usually encoded in the trnK tRNA gene intron. Probably assists in splicing its own and other chloroplast group II introns. The chain is Maturase K from Antirrhinum majus (Garden snapdragon).